Reading from the N-terminus, the 401-residue chain is Chorismate synthase (401 aa).

Arginine 40 and arginine 46 together coordinate NADP(+). FMN is bound by residues 135–137 (RAS), 256–257 (QA), glycine 302, 317–321 (KPISS), and arginine 343.

The protein belongs to the chorismate synthase family. In terms of assembly, homotetramer. Requires FMNH2 as cofactor.

It catalyses the reaction 5-O-(1-carboxyvinyl)-3-phosphoshikimate = chorismate + phosphate. Its pathway is metabolic intermediate biosynthesis; chorismate biosynthesis; chorismate from D-erythrose 4-phosphate and phosphoenolpyruvate: step 7/7. In terms of biological role, catalyzes the anti-1,4-elimination of the C-3 phosphate and the C-6 proR hydrogen from 5-enolpyruvylshikimate-3-phosphate (EPSP) to yield chorismate, which is the branch point compound that serves as the starting substrate for the three terminal pathways of aromatic amino acid biosynthesis. This reaction introduces a second double bond into the aromatic ring system. In Saccharopolyspora erythraea (strain ATCC 11635 / DSM 40517 / JCM 4748 / NBRC 13426 / NCIMB 8594 / NRRL 2338), this protein is Chorismate synthase.